The sequence spans 398 residues: DNA-directed RNA polymerase III subunit RPC4 (398 aa).

Positions 1-149 are disordered; the sequence is MSEGNAAGEP…IKKEKRETDE (149 aa). An N-acetylserine modification is found at S2. S42 carries the phosphoserine modification. 3 stretches are compositionally biased toward basic and acidic residues: residues 66–100, 116–128, and 140–149; these read KIKEEPKEEVTMKKEKRERDRDRQREGHGRGRGRP, MMKKKGNWDKTVD, and IKKEKRETDE. Glycyl lysine isopeptide (Lys-Gly) (interchain with G-Cter in SUMO2) cross-links involve residues K68 and K78. Residues R95, R97, and R99 each carry the omega-N-methylarginine modification. Residues K141, K152, K160, K190, K199, K206, K220, K285, K302, and K396 each participate in a glycyl lysine isopeptide (Lys-Gly) (interchain with G-Cter in SUMO2) cross-link. The segment at 191–244 is disordered; sequence EESEEPEAKPFSAGPKEEDMEVDVPAVKVKEEPRDEEEEAKVKAPPRAARKTPG.

It belongs to the eukaryotic RPC4/POLR3D RNA polymerase subunit family. As to quaternary structure, component of the RNA polymerase III complex consisting of 17 subunits: a ten-subunit horseshoe-shaped catalytic core composed of POLR3A/RPC1, POLR3B/RPC2, POLR1C/RPAC1, POLR1D/RPAC2, POLR3K/RPC10, POLR2E/RPABC1, POLR2F/RPABC2, POLR2H/RPABC3, POLR2K/RPABC4 and POLR2L/RPABC5; a mobile stalk composed of two subunits POLR3H/RPC8 and CRCP/RPC9, protruding from the core and functioning primarily in transcription initiation; and additional subunits homologous to general transcription factors of the RNA polymerase II machinery, POLR3C/RPC3-POLR3F/RPC6-POLR3G/RPC7 heterotrimer required for transcription initiation and POLR3D/RPC4-POLR3E/RPC5 heterodimer involved in both transcription initiation and termination. Sumoylation on Lys-141 can serve as a signal to mark misfolded Pol III for proteasomal degradation.

It localises to the nucleus. Its function is as follows. DNA-dependent RNA polymerase catalyzes the transcription of DNA into RNA using the four ribonucleoside triphosphates as substrates. Specific peripheric component of RNA polymerase III (Pol III) which synthesizes small non-coding RNAs including 5S rRNA, snRNAs, tRNAs and miRNAs from at least 500 distinct genomic loci. Enables recruitment of Pol III at transcription initiation site and drives transcription initiation from both type 2 and type 3 DNA promoters. Required for efficient transcription termination and reinitiation. Pol III plays a key role in sensing and limiting infection by intracellular bacteria and DNA viruses. Acts as nuclear and cytosolic DNA sensor involved in innate immune response. Can sense non-self dsDNA that serves as template for transcription into dsRNA. The non-self RNA polymerase III transcripts, such as Epstein-Barr virus-encoded RNAs (EBERs) induce type I interferon and NF-kappa-B through the RIG-I pathway. This is DNA-directed RNA polymerase III subunit RPC4 from Mus musculus (Mouse).